A 57-amino-acid chain; its full sequence is COP9 signalosome complex subunit 9 (57 aa).

It belongs to the CSN9 family. Component of the CSN complex, probably composed of cops1, cops2, cops3, cops4, cops5, cops6, cops7, cops8 and cops9.

It localises to the nucleus. It is found in the cytoplasm. The protein localises to the nucleoplasm. In terms of biological role, component of the COP9 signalosome complex (CSN), a complex involved in various cellular and developmental processes. The CSN complex is an essential regulator of the ubiquitin (Ubl) conjugation pathway by mediating the deneddylation of the cullin subunits of SCF-type E3 ligase complexes, leading to decrease the Ubl ligase activity. May play a role in cell proliferation. The sequence is that of COP9 signalosome complex subunit 9 from Xenopus laevis (African clawed frog).